The following is a 375-amino-acid chain: WAT1-related protein At1g70260 (375 aa).

10 helical membrane passes run 10–30, 41–61, 72–92, 106–126, 143–163, 191–211, 225–245, 259–278, 289–309, and 312–332; these read LVPF…TIMA, FVFV…FSFL, IFSW…IFMF, IVVC…SIIL, MGTI…GPFI, WFLG…FNVV, VASF…LFME, LYLI…SVHV, VPLF…SFFV, and LHYG…TVSW. Residues 25–134 form the EamA domain; it reads ALTIMAKTAL…ILGRSKLDWR (110 aa). The interval 337–356 is disordered; sequence ESEEKQSSNEERKSIKTIHH.

This sequence belongs to the drug/metabolite transporter (DMT) superfamily. Plant drug/metabolite exporter (P-DME) (TC 2.A.7.4) family.

Its subcellular location is the membrane. In Arabidopsis thaliana (Mouse-ear cress), this protein is WAT1-related protein At1g70260.